The primary structure comprises 310 residues: Aspartate carbamoyltransferase catalytic subunit (310 aa).

2 residues coordinate carbamoyl phosphate: Arg-58 and Thr-59. Lys-87 provides a ligand contact to L-aspartate. Carbamoyl phosphate-binding residues include Arg-108, His-136, and Gln-139. L-aspartate-binding residues include Arg-169 and Arg-229. The carbamoyl phosphate site is built by Leu-268 and Pro-269.

The protein belongs to the aspartate/ornithine carbamoyltransferase superfamily. ATCase family. In terms of assembly, heterododecamer (2C3:3R2) of six catalytic PyrB chains organized as two trimers (C3), and six regulatory PyrI chains organized as three dimers (R2).

It catalyses the reaction carbamoyl phosphate + L-aspartate = N-carbamoyl-L-aspartate + phosphate + H(+). It functions in the pathway pyrimidine metabolism; UMP biosynthesis via de novo pathway; (S)-dihydroorotate from bicarbonate: step 2/3. Its function is as follows. Catalyzes the condensation of carbamoyl phosphate and aspartate to form carbamoyl aspartate and inorganic phosphate, the committed step in the de novo pyrimidine nucleotide biosynthesis pathway. In Leptospira biflexa serovar Patoc (strain Patoc 1 / Ames), this protein is Aspartate carbamoyltransferase catalytic subunit.